A 317-amino-acid polypeptide reads, in one-letter code: Acetyl-coenzyme A carboxylase carboxyl transferase subunit alpha (317 aa).

In terms of domain architecture, CoA carboxyltransferase C-terminal spans 33–294; it reads NLDDEIARLQ…KQRLLDDLKE (262 aa).

The protein belongs to the AccA family. Acetyl-CoA carboxylase is a heterohexamer composed of biotin carboxyl carrier protein (AccB), biotin carboxylase (AccC) and two subunits each of ACCase subunit alpha (AccA) and ACCase subunit beta (AccD).

The protein resides in the cytoplasm. The catalysed reaction is N(6)-carboxybiotinyl-L-lysyl-[protein] + acetyl-CoA = N(6)-biotinyl-L-lysyl-[protein] + malonyl-CoA. It participates in lipid metabolism; malonyl-CoA biosynthesis; malonyl-CoA from acetyl-CoA: step 1/1. Component of the acetyl coenzyme A carboxylase (ACC) complex. First, biotin carboxylase catalyzes the carboxylation of biotin on its carrier protein (BCCP) and then the CO(2) group is transferred by the carboxyltransferase to acetyl-CoA to form malonyl-CoA. This chain is Acetyl-coenzyme A carboxylase carboxyl transferase subunit alpha, found in Pasteurella multocida (strain Pm70).